Here is a 213-residue protein sequence, read N- to C-terminus: Large ribosomal subunit protein uL3 (213 aa).

Gln-151 is subject to N5-methylglutamine.

The protein belongs to the universal ribosomal protein uL3 family. As to quaternary structure, part of the 50S ribosomal subunit. Forms a cluster with proteins L14 and L19. Post-translationally, methylated by PrmB.

Functionally, one of the primary rRNA binding proteins, it binds directly near the 3'-end of the 23S rRNA, where it nucleates assembly of the 50S subunit. The sequence is that of Large ribosomal subunit protein uL3 from Rhizobium etli (strain ATCC 51251 / DSM 11541 / JCM 21823 / NBRC 15573 / CFN 42).